The sequence spans 279 residues: MTKIKIVTDSSVTIEPELVKQLDITIVPLSVMIDNVVYSDADLKEEGKFLQLMQESKNLPKTSQPPVGVFAEIFEDLCKDGGQILAIHMSHALSGTVEAARQGASLSTADVIVVDSSFTDQALKFQVVEAAKLAQEGKDMEAILSHVEEVKNHTELYIGVSTLENLVKGGRIGRVTGLLSSLLNIRVVMQMKDHELQPMVKGRGTKTFKKWLDELITSLSERAVAEIGISYSGSDDWAKEMKESLQAYVEKPISVLETGSIIQTHTGENAWAILIRYHS.

The region spanning 4–277 is the DegV domain; the sequence is IKIVTDSSVT…ENAWAILIRY (274 aa). Residues Thr-62 and Ser-94 each coordinate hexadecanoate.

May bind long-chain fatty acids, such as palmitate, and may play a role in lipid transport or fatty acid metabolism. The chain is DegV domain-containing protein spr1019 from Streptococcus pneumoniae (strain ATCC BAA-255 / R6).